Here is a 233-residue protein sequence, read N- to C-terminus: Uridylate kinase (233 aa).

7 to 10 is a binding site for ATP; sequence KISG. Glycine 49 serves as a coordination point for UMP. Positions 50 and 54 each coordinate ATP. Residues aspartate 68 and 129-136 contribute to the UMP site; that span reads TGNPFFTT. The ATP site is built by threonine 156, tyrosine 162, and aspartate 165.

Belongs to the UMP kinase family. Homohexamer.

Its subcellular location is the cytoplasm. The enzyme catalyses UMP + ATP = UDP + ADP. It functions in the pathway pyrimidine metabolism; CTP biosynthesis via de novo pathway; UDP from UMP (UMPK route): step 1/1. Inhibited by UTP. In terms of biological role, catalyzes the reversible phosphorylation of UMP to UDP. The sequence is that of Uridylate kinase from Neorickettsia sennetsu (strain ATCC VR-367 / Miyayama) (Ehrlichia sennetsu).